Consider the following 397-residue polypeptide: NADH-quinone oxidoreductase subunit H 1 (397 aa).

The next 10 membrane-spanning stretches (helical) occupy residues 7–27, 84–104, 120–140, 156–176, 198–218, 258–278, 279–299, 313–333, 337–357, and 376–396; these read FIFI…TTLA, PFLA…GPVI, IGVL…ALAG, SAQM…PLLI, LLSG…AAFA, MITV…APWP, AAYG…LVLL, TFPA…LPMV, LLPL…FMWI, and FLFP…AWTT.

Belongs to the complex I subunit 1 family. As to quaternary structure, NDH-1 is composed of 14 different subunits. Subunits NuoA, H, J, K, L, M, N constitute the membrane sector of the complex.

It is found in the cell inner membrane. The enzyme catalyses a quinone + NADH + 5 H(+)(in) = a quinol + NAD(+) + 4 H(+)(out). NDH-1 shuttles electrons from NADH, via FMN and iron-sulfur (Fe-S) centers, to quinones in the respiratory chain. The immediate electron acceptor for the enzyme in this species is believed to be ubiquinone. Couples the redox reaction to proton translocation (for every two electrons transferred, four hydrogen ions are translocated across the cytoplasmic membrane), and thus conserves the redox energy in a proton gradient. This subunit may bind ubiquinone. This Solibacter usitatus (strain Ellin6076) protein is NADH-quinone oxidoreductase subunit H 1.